A 956-amino-acid chain; its full sequence is Zinc finger CCHC domain-containing protein 14 (956 aa).

Disordered regions lie at residues 25 to 50 (SSLNSGGGGGGGGGGGGKSAPGPSGA), 78 to 99 (ALHTSAHSTEESLPKRPLGKHG), 206 to 229 (SSSSPSQQLQSPSPGNPSLPKVGA), 243 to 276 (GIPSSQSSAQHHLQHSASTSASLPHCSHTGGTGS), 361 to 464 (KEKS…EKEK), 485 to 505 (PVQNETGSSPAAHHPLPPQLM), 543 to 583 (LEER…QGLS), and 750 to 786 (FYSGGAGSSSPGNIPASSQSHHHHHHHQQPPAPPQPA). Residues 29-43 (SGGGGGGGGGGGGKS) show a composition bias toward gly residues. 2 stretches are compositionally biased toward low complexity: residues 206–225 (SSSSPSQQLQSPSPGNPSLP) and 246–265 (SSQSSAQHHLQHSASTSASL). Residues 369–389 (LNSSAPSLVTSSGVARVTPTS) show a composition bias toward polar residues. A compositionally biased stretch (low complexity) spans 423-432 (SSEYSSSSSS). A compositionally biased stretch (basic and acidic residues) spans 438–464 (VREESSDSAEESDRRVDIHVEGTEKEK). Residues 750–768 (FYSGGAGSSSPGNIPASSQ) show a composition bias toward low complexity. The CCHC-type zinc finger occupies 913-930 (LSCYNCGATGHRAQDCKQ).

The polypeptide is Zinc finger CCHC domain-containing protein 14 (Zcchc14) (Mus musculus (Mouse)).